The primary structure comprises 395 residues: Zinc-regulated GTPase metalloprotein activator 1A (395 aa).

The segment at 1-22 (MLPAVGSADEEEDPAEEDCPEL) is disordered. Acidic residues predominate over residues 8–20 (ADEEEDPAEEDCP). A psi-PxLVp motif motif is present at residues 17 to 24 (EDCPELVP). Residue 49 to 56 (GYLGAGKT) coordinates GTP. The Zn(2+) site is built by C107, C109, and C110. The CXCC motif motif lies at 107–110 (CLCC). GTP is bound by residues 110–114 (CSVKD) and 203–206 (NKTD). The CobW C-terminal domain maps to 274 to 377 (IVTITFEVPG…ILKQLFIATV (104 aa)).

This sequence belongs to the SIMIBI class G3E GTPase family. ZNG1 subfamily. Ubiquitously expressed. Up-regulated in cultured astrocytes treated with dopamine.

It localises to the nucleus. The catalysed reaction is GTP + H2O = GDP + phosphate + H(+). Functionally, zinc chaperone that directly transfers zinc cofactor to target metalloproteins, thereby activating them. Catalyzes zinc insertion into the active site of methionine aminopeptidase METAP1, which function to cleave the initiator methionine from polypeptides during or after protein translation. Mechanistically, the N-terminal psi-PxLVp motif binds to the C6H2-type zinc finger of inactive form of METAP1. After formation of the docked complex, zinc is transferred from the CXCC motif in the GTPase domain of ZNG1A to the zinc binding site in the peptidase domain of METAP1 in a process requiring GTP hydrolysis. GTP/GDP exchange is required for release of active METAP1. The sequence is that of Zinc-regulated GTPase metalloprotein activator 1A from Homo sapiens (Human).